Reading from the N-terminus, the 267-residue chain is B3 domain-containing protein At3g11580 (267 aa).

The TF-B3 DNA-binding region spans 29–143 (FEKSLTPSDV…RLFIGWRRRG (115 aa)).

It localises to the nucleus. The polypeptide is B3 domain-containing protein At3g11580 (ARF32) (Arabidopsis thaliana (Mouse-ear cress)).